The primary structure comprises 340 residues: Phosphoribosylformylglycinamidine cyclo-ligase (340 aa).

The protein belongs to the AIR synthase family.

Its subcellular location is the cytoplasm. The catalysed reaction is 2-formamido-N(1)-(5-O-phospho-beta-D-ribosyl)acetamidine + ATP = 5-amino-1-(5-phospho-beta-D-ribosyl)imidazole + ADP + phosphate + H(+). The protein operates within purine metabolism; IMP biosynthesis via de novo pathway; 5-amino-1-(5-phospho-D-ribosyl)imidazole from N(2)-formyl-N(1)-(5-phospho-D-ribosyl)glycinamide: step 2/2. The chain is Phosphoribosylformylglycinamidine cyclo-ligase from Streptococcus pyogenes serotype M2 (strain MGAS10270).